The chain runs to 194 residues: dCTP deaminase (194 aa).

DCTP is bound by residues 110–115 (RSSLAR), D128, 136–138 (VLE), Y171, K178, and Q182. The active-site Proton donor/acceptor is the E138.

This sequence belongs to the dCTP deaminase family. Homotrimer.

It carries out the reaction dCTP + H2O + H(+) = dUTP + NH4(+). It participates in pyrimidine metabolism; dUMP biosynthesis; dUMP from dCTP (dUTP route): step 1/2. Catalyzes the deamination of dCTP to dUTP. The protein is dCTP deaminase of Mannheimia succiniciproducens (strain KCTC 0769BP / MBEL55E).